The sequence spans 393 residues: tRNA(Met) cytidine acetate ligase (393 aa).

Positions 81, 142, and 167 each coordinate ATP.

Belongs to the TmcAL family.

The protein resides in the cytoplasm. It catalyses the reaction cytidine(34) in elongator tRNA(Met) + acetate + ATP = N(4)-acetylcytidine(34) in elongator tRNA(Met) + AMP + diphosphate. Catalyzes the formation of N(4)-acetylcytidine (ac(4)C) at the wobble position of elongator tRNA(Met), using acetate and ATP as substrates. First activates an acetate ion to form acetyladenylate (Ac-AMP) and then transfers the acetyl group to tRNA to form ac(4)C34. The polypeptide is tRNA(Met) cytidine acetate ligase (Bacillus cereus (strain ATCC 10987 / NRS 248)).